The chain runs to 2294 residues: Protein Ycf2 (2294 aa).

1648 to 1655 (GSIGTGRS) is an ATP binding site.

The protein belongs to the Ycf2 family.

It localises to the plastid. Its subcellular location is the chloroplast stroma. Probable ATPase of unknown function. Its presence in a non-photosynthetic plant (Epifagus virginiana) and experiments in tobacco indicate that it has an essential function which is probably not related to photosynthesis. This Arabidopsis thaliana (Mouse-ear cress) protein is Protein Ycf2.